A 215-amino-acid chain; its full sequence is Adenylate kinase (215 aa).

10 to 15 (GAGKGT) is an ATP binding site. The interval 30–59 (STGDMFRAAMKNNTELGKKAKSFMDNGDLV) is NMP. AMP contacts are provided by residues T31, R36, 57–59 (DLV), 85–88 (GFPR), and Q92. Residues 126-163 (GRWICRTCGKTYHEIYNPPKVPGKCDLDGGELYQREDD) are LID. ATP is bound at residue R127. Residues C130 and C133 each coordinate Zn(2+). ATP is bound at residue 136–137 (TY). C150 and D153 together coordinate Zn(2+). Positions 160 and 171 each coordinate AMP. Q199 serves as a coordination point for ATP.

It belongs to the adenylate kinase family. As to quaternary structure, monomer.

The protein resides in the cytoplasm. It catalyses the reaction AMP + ATP = 2 ADP. It participates in purine metabolism; AMP biosynthesis via salvage pathway; AMP from ADP: step 1/1. Catalyzes the reversible transfer of the terminal phosphate group between ATP and AMP. Plays an important role in cellular energy homeostasis and in adenine nucleotide metabolism. The polypeptide is Adenylate kinase (Listeria innocua serovar 6a (strain ATCC BAA-680 / CLIP 11262)).